A 294-amino-acid chain; its full sequence is Tyrosine recombinase XerC (294 aa).

One can recognise a Core-binding (CB) domain in the interval 1–85 (MSRLVEDFFA…ACRGFYTWLV (85 aa)). In terms of domain architecture, Tyr recombinase spans 106–283 (KLPRILDADE…DFQYLSKVYD (178 aa)). Active-site residues include Arg145, Lys169, His235, Arg238, and His261. Tyr270 (O-(3'-phospho-DNA)-tyrosine intermediate) is an active-site residue.

Belongs to the 'phage' integrase family. XerC subfamily. In terms of assembly, forms a cyclic heterotetrameric complex composed of two molecules of XerC and two molecules of XerD.

Its subcellular location is the cytoplasm. In terms of biological role, site-specific tyrosine recombinase, which acts by catalyzing the cutting and rejoining of the recombining DNA molecules. The XerC-XerD complex is essential to convert dimers of the bacterial chromosome into monomers to permit their segregation at cell division. It also contributes to the segregational stability of plasmids. This chain is Tyrosine recombinase XerC, found in Xylella fastidiosa (strain M23).